Here is a 277-residue protein sequence, read N- to C-terminus: Large ribosomal subunit protein uL2c (277 aa).

Residues 223-277 are disordered; the sequence is VVMNPIDHPHGGGEGRAPIGRKKPLTPWGHPALGKRSRKNNKYSDTLILRRRKNS.

The protein belongs to the universal ribosomal protein uL2 family. In terms of assembly, part of the 50S ribosomal subunit.

Its subcellular location is the plastid. The protein localises to the chloroplast. The sequence is that of Large ribosomal subunit protein uL2c (rpl2) from Marchantia polymorpha (Common liverwort).